The sequence spans 62 residues: Sperm histone P2a (62 aa).

It belongs to the protamine P2 family. In terms of processing, proteolytic processing into mature chains is required for histone eviction during spermatogenesis. Transition proteins (TNP1 and TNP2) are required for processing. As to expression, testis.

It is found in the nucleus. The protein localises to the chromosome. Protamines substitute for histones in the chromatin of sperm during the haploid phase of spermatogenesis. They compact sperm DNA into a highly condensed, stable and inactive complex. The protein is Sperm histone P2a of Equus caballus (Horse).